We begin with the raw amino-acid sequence, 536 residues long: Xylulose kinase (536 aa).

Substrate is bound by residues H99, R170, D280, and N281. ATP is bound by residues W355, G441–A442, and N445.

This sequence belongs to the FGGY kinase family. In terms of assembly, monomer.

It catalyses the reaction D-xylulose + ATP = D-xylulose 5-phosphate + ADP + H(+). Functionally, phosphorylates D-xylulose to produce D-xylulose 5-phosphate, a molecule that may play an important role in the regulation of glucose metabolism and lipogenesis. The sequence is that of Xylulose kinase (Xylb) from Rattus norvegicus (Rat).